Reading from the N-terminus, the 260-residue chain is MLEINKIHQMNCFDFLDQVENKSVQLAVIDPPYNLSKADWDSFDSHNEFLPFTYRWIDKVLDKLDKDGSLYIFNTPFNCAFICQYLVSKGMIFQNWITWDKRDGMGSAKRGFSTGQETILFFSKSKNHTFNYDEVRVPYESTDRIKHASEKGILKNGKRWFPNPNGRLCGEVWHFSSQRHKEKVNGKTVKLTHITPKPRDLIERIIRASSNPNDLVLDCFMGSGTTAIVAKKLGRNFIGCDMNAEYVNQANFVLNQLEIN.

Residues Cys-12, Asp-30, Lys-197, 223–225, and 241–242 contribute to the S-adenosyl-L-methionine site; these read SGT and DM.

This sequence belongs to the N(4)/N(6)-methyltransferase family. As to quaternary structure, at low concentration exists as a monomer and homodimer. Probably binds to DNA as a monomer.

The enzyme catalyses a 2'-deoxyadenosine in DNA + S-adenosyl-L-methionine = an N(6)-methyl-2'-deoxyadenosine in DNA + S-adenosyl-L-homocysteine + H(+). A beta subtype methylase that recognizes the double-stranded sequence 5'-GAAGA-3', methylates A-5 on the top strand, and protects the DNA from cleavage by the MboII endonuclease. It is not known if the cytosine of the complementary sequence TCTTC is also methylated by this enzyme. This chain is Type II methyltransferase M1.MboII, found in Moraxella bovis.